Here is a 358-residue protein sequence, read N- to C-terminus: Putative inhibitor of apoptosis (358 aa).

BIR repeat units follow at residues 4–70 and 90–157; these read EKDR…CPFL and YAAR…CEYL. Zn(2+) is bound by residues cysteine 127, cysteine 130, histidine 147, and cysteine 154. Residues 193–283 form the CARD domain; the sequence is EPPNDLSLIR…MLYKHLFVQQ (91 aa). The RING-type zinc-finger motif lies at 311 to 346; that stretch reads CKVCMDKEVSIVFIPCGHLVVCKDCAPSLRKCPICR.

This sequence belongs to the IAP family.

In Sus scrofa (Pig), this protein is Putative inhibitor of apoptosis (PIAP).